The following is a 118-amino-acid chain: Fluoride-specific ion channel FluC 1 (118 aa).

The next 4 membrane-spanning stretches (helical) occupy residues 5 to 25 (FVLV…ISVL), 34 to 54 (FPFA…FLVS), 56 to 76 (ALGP…YTTF), and 98 to 118 (YLGC…MLGV). 2 residues coordinate Na(+): G71 and T74.

It belongs to the fluoride channel Fluc/FEX (TC 1.A.43) family.

It localises to the cell membrane. It carries out the reaction fluoride(in) = fluoride(out). With respect to regulation, na(+) is not transported, but it plays an essential structural role and its presence is essential for fluoride channel function. Functionally, fluoride-specific ion channel. Important for reducing fluoride concentration in the cell, thus reducing its toxicity. This Listeria monocytogenes serotype 4b (strain F2365) protein is Fluoride-specific ion channel FluC 1.